A 62-amino-acid polypeptide reads, in one-letter code: Large ribosomal subunit protein bL28 (62 aa).

The protein belongs to the bacterial ribosomal protein bL28 family.

This chain is Large ribosomal subunit protein bL28, found in Caldanaerobacter subterraneus subsp. tengcongensis (strain DSM 15242 / JCM 11007 / NBRC 100824 / MB4) (Thermoanaerobacter tengcongensis).